The chain runs to 281 residues: Release factor glutamine methyltransferase (281 aa).

S-adenosyl-L-methionine contacts are provided by residues 121 to 125, aspartate 144, and asparagine 188; that span reads GSGTG. A substrate-binding site is contributed by 188 to 191; the sequence is NPPY.

Belongs to the protein N5-glutamine methyltransferase family. PrmC subfamily.

It catalyses the reaction L-glutaminyl-[peptide chain release factor] + S-adenosyl-L-methionine = N(5)-methyl-L-glutaminyl-[peptide chain release factor] + S-adenosyl-L-homocysteine + H(+). Methylates the class 1 translation termination release factors RF1/PrfA and RF2/PrfB on the glutamine residue of the universally conserved GGQ motif. The sequence is that of Release factor glutamine methyltransferase from Aquifex aeolicus (strain VF5).